The following is a 719-amino-acid chain: Disintegrin and metalloproteinase domain-containing protein 18 (719 aa).

The first 19 residues, 1 to 19, serve as a signal peptide directing secretion; sequence MPLLFILAELAMLFARLDS. Residues 20-179 constitute a propeptide that is removed on maturation; sequence EGICLHITVP…QDKNHSQLLP (160 aa). N-linked (GlcNAc...) asparagine glycosylation is found at Asn61, Asn75, Asn121, Asn152, Asn173, Asn244, and Asn331. The Extracellular segment spans residues 173-683; sequence NHSQLLPQSL…TKRLSKNEDS (511 aa). In terms of domain architecture, Peptidase M12B spans 180–378; it reads QSLKLHIIVG…FDTQCLGDLS (199 aa). Disulfide bonds link Cys289/Cys373, Cys332/Cys357, and Cys334/Cys339. N-linked (GlcNAc...) asparagine glycosylation is found at Asn356 and Asn405. In terms of domain architecture, Disintegrin spans 387 to 476; that stretch reads QAVCGNGIME…HCVPDTFALN (90 aa). Residues Cys447 and Cys468 are joined by a disulfide bond. 3 N-linked (GlcNAc...) asparagine glycosylation sites follow: Asn607, Asn614, and Asn621. An EGF-like domain is found at 616-650; the sequence is TGNDCNATKKCKGNGICNNFGNCQCFPDYRPPDCN. Disulfide bonds link Cys620–Cys632, Cys626–Cys638, and Cys640–Cys649. Residues 684-704 traverse the membrane as a helical segment; the sequence is WVILGFFIFLPFIVTFLVGIM. The Cytoplasmic portion of the chain corresponds to 705-719; that stretch reads KRNERKIVPQGEHKI.

Post-translationally, the prodomain and the metalloprotease-like domain are cleaved during the epididymal maturation of the spermatozoa. In terms of tissue distribution, expressed specifically in testis.

Its subcellular location is the membrane. Sperm surface membrane protein that may be involved in spermatogenesis and fertilization. This is a non catalytic metalloprotease-like protein. The polypeptide is Disintegrin and metalloproteinase domain-containing protein 18 (Adam18) (Mus musculus (Mouse)).